A 674-amino-acid chain; its full sequence is Linear primary-alkylsulfatase (674 aa).

The first 41 residues, M1–A41, serve as a signal peptide directing secretion. 6 residues coordinate Zn(2+): H192, H194, D196, H197, E303, and E322. Sulfate contacts are provided by residues N330–R335 and R340. H367 provides a ligand contact to Zn(2+). Y428 is a sulfate binding site.

This sequence belongs to the metallo-beta-lactamase superfamily. Type III sulfatase family. As to quaternary structure, homodimer. The cofactor is Zn(2+).

It localises to the periplasm. The catalysed reaction is a primary linear alkyl sulfate ester + H2O = a primary alcohol + sulfate + H(+). Inhibited by EDTA. Slightly activated in the presence of Ca(2+). Its function is as follows. Alkylsulfatase that cleaves primary alkyl sulfates such as sodium octyl sulfate and the widely used detergent sodium dodecyl sulfate (SDS). In Pseudomonas sp, this protein is Linear primary-alkylsulfatase.